The following is a 349-amino-acid chain: Ureidoglycolate dehydrogenase (NAD(+)) (349 aa).

Residue histidine 116 is the Proton acceptor of the active site. Residues serine 140, 174–176, lysine 224, and 306–308 each bind NAD(+); these read DMA and GQD.

Belongs to the LDH2/MDH2 oxidoreductase family. In terms of assembly, homodimer.

It is found in the cytoplasm. The catalysed reaction is (S)-ureidoglycolate + NAD(+) = N-carbamoyl-2-oxoglycine + NADH + H(+). The protein operates within nitrogen metabolism; (S)-allantoin degradation; oxalurate from (S)-ureidoglycolate: step 1/1. AllD plays a pivotal role as a metabolic branch-point enzyme in nitrogen utilization via the assimilation of allantoin. It is able to utilize allantoin as a sole source of nitrogen under anaerobic conditions. Catalyzes the oxidation of ureidoglycolate to oxalurate. In Escherichia coli (strain K12), this protein is Ureidoglycolate dehydrogenase (NAD(+)).